A 485-amino-acid polypeptide reads, in one-letter code: NADH-quinone oxidoreductase subunit N (485 aa).

14 helical membrane passes run Leu-8–Ile-28, Phe-35–Val-55, Gly-71–Ala-91, Phe-105–Leu-125, Ser-127–Phe-147, Tyr-159–Ala-179, Leu-203–Phe-223, Pro-235–Met-255, Val-271–Gln-291, Leu-297–Gln-317, Val-326–Leu-346, Ala-373–Ile-393, Trp-408–Val-430, and Ile-455–Ile-475.

Belongs to the complex I subunit 2 family. NDH-1 is composed of 13 different subunits. Subunits NuoA, H, J, K, L, M, N constitute the membrane sector of the complex.

The protein resides in the cell inner membrane. It catalyses the reaction a quinone + NADH + 5 H(+)(in) = a quinol + NAD(+) + 4 H(+)(out). NDH-1 shuttles electrons from NADH, via FMN and iron-sulfur (Fe-S) centers, to quinones in the respiratory chain. The immediate electron acceptor for the enzyme in this species is believed to be ubiquinone. Couples the redox reaction to proton translocation (for every two electrons transferred, four hydrogen ions are translocated across the cytoplasmic membrane), and thus conserves the redox energy in a proton gradient. The sequence is that of NADH-quinone oxidoreductase subunit N from Escherichia coli O1:K1 / APEC.